The primary structure comprises 70 residues: Large ribosomal subunit protein uL29 (70 aa).

Belongs to the universal ribosomal protein uL29 family.

The protein is Large ribosomal subunit protein uL29 of Clostridium botulinum (strain ATCC 19397 / Type A).